We begin with the raw amino-acid sequence, 679 residues long: tRNA uridine 5-carboxymethylaminomethyl modification enzyme MnmG (679 aa).

15–20 contributes to the FAD binding site; sequence GAGHAG. 314–328 provides a ligand contact to NAD(+); sequence GPRYCPSIEDKIVRF.

The protein belongs to the MnmG family. Homodimer. Heterotetramer of two MnmE and two MnmG subunits. It depends on FAD as a cofactor.

The protein localises to the cytoplasm. NAD-binding protein involved in the addition of a carboxymethylaminomethyl (cmnm) group at the wobble position (U34) of certain tRNAs, forming tRNA-cmnm(5)s(2)U34. The chain is tRNA uridine 5-carboxymethylaminomethyl modification enzyme MnmG from Roseiflexus sp. (strain RS-1).